Here is a 368-residue protein sequence, read N- to C-terminus: Seven-bladed beta-propeller protein MSMEG_5308 (368 aa).

In terms of assembly, interacts with MmpL3 and TtfA.

The protein resides in the cell septum. It is found in the cell tip. Stabilizes the MmpL3/TtfA trehalose monomycolate (TMM) transport complex under stress conditions. The chain is Seven-bladed beta-propeller protein MSMEG_5308 from Mycolicibacterium smegmatis (strain ATCC 700084 / mc(2)155) (Mycobacterium smegmatis).